The primary structure comprises 321 residues: Coiled-coil domain-containing protein 42-like 1 (321 aa).

Coiled-coil stretches lie at residues 36-144 (IRRL…EKCH) and 202-229 (IVQFSNEIHRLYIRLEKAKKKRREWELR).

Belongs to the CFAP73 family.

This chain is Coiled-coil domain-containing protein 42-like 1, found in Xenopus laevis (African clawed frog).